We begin with the raw amino-acid sequence, 809 residues long: Ribosome biogenesis protein ERB1 (809 aa).

Residues Met-1–Ile-107 form a disordered region. Composition is skewed to acidic residues over residues Ala-30–Asp-70 and Leu-77–Glu-97. Residues Arg-267 to Ser-383 are required for interaction with NOP7. The segment at Ser-383–Pro-419 is required for interaction with YTM1. 2 WD repeats span residues Gly-435–Asn-474 and Asn-483–Glu-523. Positions Glu-545–Val-569 are disordered. The span at Gly-553 to Ser-563 shows a compositional bias: acidic residues. WD repeat units lie at residues Gln-593–Pro-635, Lys-638–Lys-676, Pro-679–Lys-718, Tyr-722–Thr-762, and Val-778–Thr-809.

Belongs to the WD repeat BOP1/ERB1 family. Component of the NOP7 complex, composed of ERB1, NOP7 and YTM1. The complex is held together by ERB1, which interacts with NOP7 via its N-terminal domain and with YTM1 via a high-affinity interaction between the seven-bladed beta-propeller domains of the 2 proteins. The NOP7 complex associates with the 66S pre-ribosome.

It is found in the nucleus. Its subcellular location is the nucleolus. The protein localises to the nucleoplasm. In terms of biological role, component of the NOP7 complex, which is required for maturation of the 25S and 5.8S ribosomal RNAs and formation of the 60S ribosome. The chain is Ribosome biogenesis protein ERB1 from Scheffersomyces stipitis (strain ATCC 58785 / CBS 6054 / NBRC 10063 / NRRL Y-11545) (Yeast).